The chain runs to 280 residues: Borealin (280 aa).

Residues 140–153 (KVAAKKPSTARRTR) show a composition bias toward basic residues. The interval 140 to 187 (KVAAKKPSTARRTRASVGNVANTSKRTSKRGRATPSASKQAETSLLGY) is disordered.

The protein belongs to the borealin family. In terms of assembly, component of the CPC at least composed of survivin/birc5, incenp, cdca8/borealin and/or cdca9/dasra-A, and aurkb/aurora-B. Interacts with incenp (via N-terminus).

It is found in the nucleus. The protein localises to the chromosome. Its subcellular location is the centromere. It localises to the cytoplasm. The protein resides in the cytoskeleton. It is found in the spindle. Its function is as follows. Component of the chromosomal passenger complex (CPC), a complex that acts as a key regulator of mitosis. The CPC complex has essential functions at the centromere in ensuring correct chromosome alignment and segregation and is required for chromatin-induced microtubule stabilization and spindle assembly. Contributes to CPC function by facilitating loading of the CPC onto chromosomes. This Xenopus laevis (African clawed frog) protein is Borealin (cdca8).